Here is a 207-residue protein sequence, read N- to C-terminus: Guanylate kinase (207 aa).

Positions 6–185 constitute a Guanylate kinase-like domain; sequence GLLIVLSGPS…AKNRIQCIVE (180 aa). 13-20 is an ATP binding site; that stretch reads GPSGVGKG.

The protein belongs to the guanylate kinase family.

It localises to the cytoplasm. The enzyme catalyses GMP + ATP = GDP + ADP. Functionally, essential for recycling GMP and indirectly, cGMP. The sequence is that of Guanylate kinase from Staphylococcus aureus (strain Mu50 / ATCC 700699).